The chain runs to 176 residues: MKFKRLLHSGIASLSLVACGVNAATDLGPAGDIHFSITITTKACEMEKSDLEVDMGTMTLQKPAAVGTVLSKKDFTIELKECDGISKATVEMDSQSDSDDDSMFALEAGGATGVALKIEDDKGTQQVPKGSSGTPIEWAIDGETTSLHYQASYVVVNTQATGGTANALVNFSITYE.

An N-terminal signal peptide occupies residues 1 to 23 (MKFKRLLHSGIASLSLVACGVNA).

The protein belongs to the fimbrial protein family.

It is found in the fimbrium. Functionally, part of the lpfABCC'DE fimbrial operon. LP fimbriae may participate in the interaction with eukaryotic cells by assisting in microcolony formation. In Escherichia coli O157:H7, this protein is Probable fimbrial subunit LpfE (lpfE).